The following is a 390-amino-acid chain: Putative 2-isopropylmalate synthase (390 aa).

Positions 5 to 267 constitute a Pyruvate carboxyltransferase domain; the sequence is IIIFDTTLRD…KTNIKYQEIY (263 aa). Mn(2+)-binding residues include aspartate 14, histidine 202, histidine 204, and asparagine 238.

This sequence belongs to the alpha-IPM synthase/homocitrate synthase family. LeuA type 1 subfamily. As to quaternary structure, homodimer. It depends on Mn(2+) as a cofactor.

Its subcellular location is the cytoplasm. The catalysed reaction is 3-methyl-2-oxobutanoate + acetyl-CoA + H2O = (2S)-2-isopropylmalate + CoA + H(+). It participates in amino-acid biosynthesis; L-leucine biosynthesis; L-leucine from 3-methyl-2-oxobutanoate: step 1/4. Catalyzes the condensation of the acetyl group of acetyl-CoA with 3-methyl-2-oxobutanoate (2-ketoisovalerate) to form 3-carboxy-3-hydroxy-4-methylpentanoate (2-isopropylmalate). The protein is Putative 2-isopropylmalate synthase of Buchnera aphidicola subsp. Baizongia pistaciae (strain Bp).